A 419-amino-acid chain; its full sequence is Pyrrolysine--tRNA ligase (419 aa).

Residues 100–157 (APKVKKAMPKSVSRAPKPLENSVSAKASTNTSRSVPSPAKSTPNSSVPASAPAPSLTR) form a disordered region. Residues 120 to 141 (NSVSAKASTNTSRSVPSPAKST) show a composition bias toward polar residues. Over residues 142 to 154 (PNSSVPASAPAPS) the composition is skewed to low complexity.

Belongs to the class-II aminoacyl-tRNA synthetase family.

The protein localises to the cytoplasm. It catalyses the reaction tRNA(Pyl) + L-pyrrolysine + ATP = L-pyrrolysyl-tRNA(Pyl) + AMP + diphosphate. In terms of biological role, catalyzes the attachment of pyrrolysine to tRNA(Pyl). Pyrrolysine is a lysine derivative encoded by the termination codon UAG. The chain is Pyrrolysine--tRNA ligase (pylS) from Methanosarcina barkeri.